The sequence spans 330 residues: Beta-ketoacyl-[acyl-carrier-protein] synthase III (330 aa).

Residues Cys118 and His257 contribute to the active site. An ACP-binding region spans residues 258–262; that stretch reads QANLR. The active site involves Asn287.

Belongs to the thiolase-like superfamily. FabH family. Homodimer.

Its subcellular location is the cytoplasm. The enzyme catalyses malonyl-[ACP] + acetyl-CoA + H(+) = 3-oxobutanoyl-[ACP] + CO2 + CoA. The protein operates within lipid metabolism; fatty acid biosynthesis. In terms of biological role, catalyzes the condensation reaction of fatty acid synthesis by the addition to an acyl acceptor of two carbons from malonyl-ACP. Catalyzes the first condensation reaction which initiates fatty acid synthesis and may therefore play a role in governing the total rate of fatty acid production. Possesses both acetoacetyl-ACP synthase and acetyl transacylase activities. Its substrate specificity determines the biosynthesis of branched-chain and/or straight-chain of fatty acids. The protein is Beta-ketoacyl-[acyl-carrier-protein] synthase III of Nitratidesulfovibrio vulgaris (strain DSM 19637 / Miyazaki F) (Desulfovibrio vulgaris).